We begin with the raw amino-acid sequence, 1238 residues long: uncharacterized protein (1238 aa).

6 disordered regions span residues 1-38 (MSSK…DISS), 122-156 (SSTP…RPSF), 229-439 (PKNN…KNKE), 660-1016 (KNKL…TGAA), 1051-1083 (EEED…KLNS), and 1098-1191 (KKSG…NASR). Composition is skewed to low complexity over residues 10–26 (NKNN…NNNN), 129–149 (LSPF…QSPL), and 234–276 (QIDS…TQSQ). Polar residues predominate over residues 317–343 (ELQNQTQINKSKQDLTNISQKINITTS). Over residues 344–361 (QHDKDDLGEYRMSEKGGG) the composition is skewed to basic and acidic residues. Residues 362 to 372 (DDGDDDDDYDN) are compositionally biased toward acidic residues. Residues 383–394 (TNKKQQQQHHHK) show a composition bias toward basic residues. The span at 395–416 (GKEESQSEYYEKEKEKEKEDIA) shows a compositional bias: basic and acidic residues. 3 stretches are compositionally biased toward low complexity: residues 417-435 (TTRA…NNIN), 678-691 (QQQQ…QQQE), and 712-792 (QPSQ…QEKQ). Residues 793–805 (QSQEKHQSQEKHQ) are compositionally biased toward basic and acidic residues. 2 stretches are compositionally biased toward low complexity: residues 806–859 (SQQS…SQQK) and 882–906 (SQSQ…QSQR). A compositionally biased stretch (acidic residues) spans 916–927 (ENQDSENLDDTV). The span at 929-944 (MNYNQIPSTLDHSTLQ) shows a compositional bias: polar residues. The span at 966-975 (EIERRRRELA) shows a compositional bias: basic and acidic residues. Positions 976 to 990 (GEDSDEEFEILDEDQ) are enriched in acidic residues. 2 stretches are compositionally biased toward low complexity: residues 1062–1083 (QNNN…KLNS) and 1108–1121 (SSSS…NKKN). Polar residues predominate over residues 1123 to 1133 (PQPTKSVNKPR). Low complexity predominate over residues 1142 to 1181 (SQNRQKQSEQQQQQPQQQPQLPQQQQQQQQQQQLRQQQNE). Positions 1182–1191 (NTISSLNASR) are enriched in polar residues.

This is an uncharacterized protein from Dictyostelium discoideum (Social amoeba).